The sequence spans 216 residues: Ribonuclease HII (216 aa).

In terms of domain architecture, RNase H type-2 spans 27 to 216; it reads ASLAGVDEAG…VKEHVKNCEG (190 aa). Asp-33, Glu-34, and Asp-125 together coordinate a divalent metal cation.

It belongs to the RNase HII family. The cofactor is Mn(2+). It depends on Mg(2+) as a cofactor.

It is found in the cytoplasm. It carries out the reaction Endonucleolytic cleavage to 5'-phosphomonoester.. Functionally, endonuclease that specifically degrades the RNA of RNA-DNA hybrids. In Geotalea daltonii (strain DSM 22248 / JCM 15807 / FRC-32) (Geobacter daltonii), this protein is Ribonuclease HII.